Consider the following 732-residue polypeptide: Acylamino-acid-releasing enzyme (732 aa).

The residue at position 1 (M1) is an N-acetylmethionine. S185 and S187 each carry phosphoserine. Active-site charge relay system residues include S587, D675, and H707.

This sequence belongs to the peptidase S9C family. In terms of assembly, homotetramer.

Its subcellular location is the cytoplasm. It catalyses the reaction Cleavage of an N-acetyl or N-formyl amino acid from the N-terminus of a polypeptide.. With respect to regulation, homotetramerization is required for activity. Tetramerization results in the formation of a gated channel which is involved in substrate selection and substrate access to the catalytic sites. This enzyme catalyzes the hydrolysis of the N-terminal peptide bond of an N-acetylated peptide to generate an N-acetylated amino acid and a peptide with a free N-terminus. It preferentially cleaves off Ac-Ala, Ac-Met and Ac-Ser. Also, involved in the degradation of oxidized and glycated proteins. This is Acylamino-acid-releasing enzyme (Apeh) from Mus musculus (Mouse).